A 90-amino-acid chain; its full sequence is Small ribosomal subunit protein bS20 (90 aa).

The interval Met-1–Arg-25 is disordered. Residues Ala-7 to His-20 are compositionally biased toward basic residues.

This sequence belongs to the bacterial ribosomal protein bS20 family.

In terms of biological role, binds directly to 16S ribosomal RNA. The sequence is that of Small ribosomal subunit protein bS20 from Pseudomonas fluorescens (strain Pf0-1).